The primary structure comprises 89 residues: Small ribosomal subunit protein uS15 (89 aa).

This sequence belongs to the universal ribosomal protein uS15 family. In terms of assembly, part of the 30S ribosomal subunit. Forms a bridge to the 50S subunit in the 70S ribosome, contacting the 23S rRNA.

One of the primary rRNA binding proteins, it binds directly to 16S rRNA where it helps nucleate assembly of the platform of the 30S subunit by binding and bridging several RNA helices of the 16S rRNA. Its function is as follows. Forms an intersubunit bridge (bridge B4) with the 23S rRNA of the 50S subunit in the ribosome. The chain is Small ribosomal subunit protein uS15 from Acinetobacter baumannii (strain AB307-0294).